A 208-amino-acid chain; its full sequence is Sodium/potassium-transporting ATPase subunit beta-1-interacting protein 2 (208 aa).

4 helical membrane passes run 1–23 (MGYC…CVLE), 35–55 (APIL…FGTI), 62–82 (ITGY…VICF), and 153–173 (LQIV…KCIT).

The protein belongs to the NKAIN family. In terms of assembly, interacts with ATP1B1. Expressed in fetal brain. Weakly expressed in adult brain and thymus. Not expressed in any other normal tissue examined.

Its subcellular location is the cell membrane. This is Sodium/potassium-transporting ATPase subunit beta-1-interacting protein 2 (NKAIN2) from Homo sapiens (Human).